Here is a 493-residue protein sequence, read N- to C-terminus: Hexokinase-like 1 protein (493 aa).

The region spanning Ala38–Ala488 is the Hexokinase domain. The hexokinase small subdomain stretch occupies residues Ser93–Val232. Positions 107, 108, and 109 each coordinate ADP. Residues Thr198, Lys199, Asn233, and Asp234 each coordinate D-glucose. Residues Asn233–Asp477 are hexokinase large subdomain. Thr257 provides a ligand contact to ADP. Positions 260, 287, and 317 each coordinate D-glucose. An ADP-binding site is contributed by Ala442.

Belongs to the hexokinase family.

The catalysed reaction is a D-hexose + ATP = a D-hexose 6-phosphate + ADP + H(+). The enzyme catalyses D-fructose + ATP = D-fructose 6-phosphate + ADP + H(+). It carries out the reaction D-glucose + ATP = D-glucose 6-phosphate + ADP + H(+). It functions in the pathway carbohydrate metabolism; hexose metabolism. Its pathway is carbohydrate degradation; glycolysis; D-glyceraldehyde 3-phosphate and glycerone phosphate from D-glucose: step 1/4. Functionally, fructose and glucose phosphorylating enzyme. The chain is Hexokinase-like 1 protein from Arabidopsis thaliana (Mouse-ear cress).